Reading from the N-terminus, the 424-residue chain is MNKARAIARWISFLLLIAAGQVCAELQVQISQGVEGAIPVAVVPFANQGSLSDSLSQIVSADLQRSGRFRTLAESAMQERPTAPDQVQQAAWQALGQDFVVVGQIRPSGDGYEADFHVVDVIRGTLVVSYRLPFGRAETRQAAHRIADVIYKAITGEPGAFATRVAYVSVSGEGANRRYNLQVADTDGYNPQSVIVSNEPIMSPAWSPDGTKIAYVSFESRRSAIYVQTLATGERRKVSDAPGINGAPAFSPDGSRLALTLSKDGNPDIYVMNLGSGGLTRITDYSGIDTEPNWSRDGRSIVFTSDRGGKPQLYLVSASGGPAERLTYEGDYNARGVFSPDGRSLAMVHGKGGDYRIAVMDLASRAVRVLTSGPLDESPGFAPNGSMILYAARRGQLAAVSIDGKVRQSLRIEGGAVREPAWSP.

An N-terminal signal peptide occupies residues M1–A24.

This sequence belongs to the TolB family. The Tol-Pal system is composed of five core proteins: the inner membrane proteins TolA, TolQ and TolR, the periplasmic protein TolB and the outer membrane protein Pal. They form a network linking the inner and outer membranes and the peptidoglycan layer.

Its subcellular location is the periplasm. Its function is as follows. Part of the Tol-Pal system, which plays a role in outer membrane invagination during cell division and is important for maintaining outer membrane integrity. The polypeptide is Tol-Pal system protein TolB (Methylococcus capsulatus (strain ATCC 33009 / NCIMB 11132 / Bath)).